A 90-amino-acid polypeptide reads, in one-letter code: Small ribosomal subunit protein bS16 (90 aa).

The protein belongs to the bacterial ribosomal protein bS16 family.

This chain is Small ribosomal subunit protein bS16, found in Streptococcus pneumoniae serotype 19F (strain G54).